The chain runs to 581 residues: Terpene synthase 2, chloroplastic (581 aa).

The N-terminal 34 residues, M1–A34, are a transit peptide targeting the chloroplast. Substrate-binding residues include R299, D336, D340, and R480. 2 residues coordinate Mg(2+): D336 and D340. The DDXXD motif motif lies at D336–D340. Mg(2+) is bound by residues D483, S487, and E491.

It belongs to the terpene synthase family. Monomer. It depends on Mg(2+) as a cofactor.

The protein localises to the plastid. The protein resides in the chloroplast. It catalyses the reaction (2E,6E)-farnesyl diphosphate + H2O = (3S,6E)-nerolidol + diphosphate. The enzyme catalyses (2E,6E,10E)-geranylgeranyl diphosphate + H2O = (6E,10E)-geranyllinalool + diphosphate. The catalysed reaction is (2E)-geranyl diphosphate + H2O = (S)-linalool + diphosphate. The protein operates within secondary metabolite biosynthesis; terpenoid biosynthesis. Its function is as follows. Involved in sesquiterpene (C15), diterpene (C20) and monoterpene (C10) biosynthesis. Has sesquiterpene synthase activity, converting farnesyl diphosphate to nerolidol, the precursor of the volatile C11-homoterpene (E)-3,8-dimethyl-1,4,7-nonatriene (DMNT). Has diterpene synthase activity, converting geranylgeranyl diphosphate to (E,E)-geranyllinalool, the precursor of the volatile C16-homoterpene (E,E)-4,8,12-trimethyltrideca 1,3,7,11-tetraene (TMTT). Has monoterpene synthase activity, converting geranyl diphosphate into linalool. Forms only the S-isomers of the three tertiary terpene alcohols. The protein is Terpene synthase 2, chloroplastic of Zea mays (Maize).